We begin with the raw amino-acid sequence, 322 residues long: Large ribosomal subunit protein uL29m (322 aa).

A disordered region spans residues 1–44 (MLNVQRGLHTTVRLSARTKYTKPKPKPQARVIKSEPSQVTHHDN).

It belongs to the universal ribosomal protein uL29 family. As to quaternary structure, component of the mitochondrial large ribosomal subunit. Mature mitochondrial ribosomes consist of a small (37S) and a large (54S) subunit. The 37S subunit contains at least 33 different proteins and 1 molecule of RNA (15S). The 54S subunit contains at least 45 different proteins and 1 molecule of RNA (21S).

The protein resides in the mitochondrion. The sequence is that of Large ribosomal subunit protein uL29m (MRPL4) from Vanderwaltozyma polyspora (strain ATCC 22028 / DSM 70294 / BCRC 21397 / CBS 2163 / NBRC 10782 / NRRL Y-8283 / UCD 57-17) (Kluyveromyces polysporus).